Here is a 28-residue protein sequence, read N- to C-terminus: Somatostatin-2 (28 aa).

Cysteines 17 and 28 form a disulfide.

Belongs to the somatostatin family.

The protein resides in the secreted. Somatostatin inhibits the release of somatotropin. This is Somatostatin-2 (sst2) from Oreochromis niloticus (Nile tilapia).